Here is a 363-residue protein sequence, read N- to C-terminus: Aminomethyltransferase (363 aa).

Belongs to the GcvT family. The glycine cleavage system is composed of four proteins: P, T, L and H.

The catalysed reaction is N(6)-[(R)-S(8)-aminomethyldihydrolipoyl]-L-lysyl-[protein] + (6S)-5,6,7,8-tetrahydrofolate = N(6)-[(R)-dihydrolipoyl]-L-lysyl-[protein] + (6R)-5,10-methylene-5,6,7,8-tetrahydrofolate + NH4(+). Its function is as follows. The glycine cleavage system catalyzes the degradation of glycine. This Staphylococcus aureus (strain bovine RF122 / ET3-1) protein is Aminomethyltransferase.